The sequence spans 307 residues: Tropinone reductase homolog At2g29340 (307 aa).

13–37 is a binding site for NADP(+); that stretch reads LVTGGASGIGYAIVEELAGFGARIH. Serine 146 is a substrate binding site. Catalysis depends on tyrosine 159, which acts as the Proton acceptor.

It belongs to the short-chain dehydrogenases/reductases (SDR) family. SDR65C subfamily.

In Arabidopsis thaliana (Mouse-ear cress), this protein is Tropinone reductase homolog At2g29340.